A 255-amino-acid polypeptide reads, in one-letter code: Geranylgeranylglyceryl phosphate synthase (255 aa).

The Mg(2+) site is built by Asp34 and Thr64. Sn-glycerol 1-phosphate-binding positions include 182-188, 213-214, and 235-236; these read YLEAGSG, GG, and GN.

This sequence belongs to the GGGP/HepGP synthase family. Group II subfamily. Mg(2+) is required as a cofactor.

The protein localises to the cytoplasm. The catalysed reaction is sn-glycerol 1-phosphate + (2E,6E,10E)-geranylgeranyl diphosphate = sn-3-O-(geranylgeranyl)glycerol 1-phosphate + diphosphate. It participates in membrane lipid metabolism; glycerophospholipid metabolism. Prenyltransferase that catalyzes the transfer of the geranylgeranyl moiety of geranylgeranyl diphosphate (GGPP) to the C3 hydroxyl of sn-glycerol-1-phosphate (G1P). This reaction is the first ether-bond-formation step in the biosynthesis of archaeal membrane lipids. This chain is Geranylgeranylglyceryl phosphate synthase, found in Saccharolobus solfataricus (strain ATCC 35092 / DSM 1617 / JCM 11322 / P2) (Sulfolobus solfataricus).